The chain runs to 429 residues: Septin-8 (429 aa).

Residues 1–16 (MAATDLERVSNAEPEP) show a composition bias toward basic and acidic residues. Residues 1 to 23 (MAATDLERVSNAEPEPRSLSLGG) form a disordered region. Ala-2 carries the N-acetylalanine modification. A Phosphoserine modification is found at Ser-10. The Septin-type G domain maps to 41-307 (QGFSFNILCV…ELYRRCKLEE (267 aa)). Positions 51-58 (GETGIGKS) are G1 motif. GTP contacts are provided by residues 51–58 (GETGIGKS), Gly-106, 187–195 (KADTISKSE), Gly-241, and Arg-256. Residues 103 to 106 (DAVG) are G3 motif. The tract at residues 186 to 189 (AKAD) is G4 motif. The stretch at 320–412 (FSLQETYEAK…AAMEALQSQA (93 aa)) forms a coiled coil. Polar residues predominate over residues 409 to 420 (QSQALHATSQQP). The interval 409–429 (QSQALHATSQQPLRKDKDKKN) is disordered.

The protein belongs to the TRAFAC class TrmE-Era-EngA-EngB-Septin-like GTPase superfamily. Septin GTPase family. As to quaternary structure, septins polymerize into heterooligomeric protein complexes that form filaments, and can associate with cellular membranes, actin filaments and microtubules. GTPase activity is required for filament formation. Interacts with SEPTIN5. Interacts with CDK14, SEPTIN4 and SEPTIN7. Interacts with VAMP2; the interaction inhibits interaction of VAMP2 with SYP. Interacts with STX1A.

It is found in the cytoplasm. It localises to the cytoskeleton. The protein resides in the synapse. Its subcellular location is the cell projection. The protein localises to the axon. It is found in the cytoplasmic vesicle. It localises to the secretory vesicle. The protein resides in the synaptic vesicle membrane. Its subcellular location is the presynapse. Filament-forming cytoskeletal GTPase. May play a role in platelet secretion. Seems to participate in the process of SNARE complex formation in synaptic vesicles. This is Septin-8 from Mus musculus (Mouse).